Here is a 189-residue protein sequence, read N- to C-terminus: Protein GrpE (189 aa).

Residues 1-21 (MADEQNLDNQNPETPEQSQAD) form a disordered region. Polar residues predominate over residues 7-20 (LDNQNPETPEQSQA).

It belongs to the GrpE family. Homodimer.

Its subcellular location is the cytoplasm. Participates actively in the response to hyperosmotic and heat shock by preventing the aggregation of stress-denatured proteins, in association with DnaK and GrpE. It is the nucleotide exchange factor for DnaK and may function as a thermosensor. Unfolded proteins bind initially to DnaJ; upon interaction with the DnaJ-bound protein, DnaK hydrolyzes its bound ATP, resulting in the formation of a stable complex. GrpE releases ADP from DnaK; ATP binding to DnaK triggers the release of the substrate protein, thus completing the reaction cycle. Several rounds of ATP-dependent interactions between DnaJ, DnaK and GrpE are required for fully efficient folding. The chain is Protein GrpE from Stutzerimonas stutzeri (strain A1501) (Pseudomonas stutzeri).